The chain runs to 151 residues: Deoxyuridine 5'-triphosphate nucleotidohydrolase (151 aa).

Substrate-binding positions include 70 to 72, N83, 87 to 89, and M97; these read RSG and LID.

It belongs to the dUTPase family. The cofactor is Mg(2+).

The catalysed reaction is dUTP + H2O = dUMP + diphosphate + H(+). It participates in pyrimidine metabolism; dUMP biosynthesis; dUMP from dCTP (dUTP route): step 2/2. In terms of biological role, this enzyme is involved in nucleotide metabolism: it produces dUMP, the immediate precursor of thymidine nucleotides and it decreases the intracellular concentration of dUTP so that uracil cannot be incorporated into DNA. In Yersinia enterocolitica serotype O:8 / biotype 1B (strain NCTC 13174 / 8081), this protein is Deoxyuridine 5'-triphosphate nucleotidohydrolase.